We begin with the raw amino-acid sequence, 218 residues long: uncharacterized protein (218 aa).

Residues 2–216 enclose the ABC transporter domain; that stretch reads IEVLNLTKKI…ETSEKVIYKK (215 aa). 34–41 is a binding site for ATP; sequence GSNGSGKT.

Belongs to the ABC transporter superfamily.

This is an uncharacterized protein from Bacillus subtilis (strain 168).